A 605-amino-acid chain; its full sequence is Protein spinster (605 aa).

The interval 1–94 (MSLKHQKQSY…HPLGEHHHIP (94 aa)) is disordered. Positions 27 to 38 (SSGSSGSSSSEE) are enriched in low complexity. Residues 55–67 (TTYSSQQLMPSDT) are compositionally biased toward polar residues. Residues 76 to 85 (RLRPHHHHHH) are compositionally biased toward basic residues. The helical transmembrane segment at 115–137 (FTVTVLCFVNLINYMDRFTIAGV) threads the bilayer. Residue Asn-149 is glycosylated (N-linked (GlcNAc...) asparagine). Helical transmembrane passes span 153-173 (GLLQ…FGYL), 180-200 (PWIM…GSFM), 203-223 (FGWF…YSTI), 240-260 (MLAL…IVGS), and 271-291 (WALR…LLIK). The N-linked (GlcNAc...) asparagine glycan is linked to Asn-319. The next 5 helical transmembrane spans lie at 329–349 (FTCV…FIYL), 367–387 (FNFG…GSFL), 401–421 (VICA…CLLV), 431–451 (LIFF…DILL), and 465–485 (FQIL…VGAI). N-linked (GlcNAc...) asparagine glycosylation occurs at Asn-519. A helical transmembrane segment spans residues 558 to 578 (STSFVEVLGGIFFIFTACFII). Asn-583 carries N-linked (GlcNAc...) asparagine glycosylation.

Belongs to the major facilitator superfamily. Spinster (TC 2.A.1.49) family. As to expression, enriched in brain (at protein level).

The protein localises to the late endosome membrane. It is found in the lysosome membrane. Functionally, probable sphingolipid transporter that plays a central role in endosomes and/or lysosomes storage. Involved in TGF-beta-mediated synaptic growth regulation both pre- and postsynaptically via its function in endosomal storage regulation. Also required during oogenesis by regulating yolk spheres storage. The sequence is that of Protein spinster (spin) from Drosophila melanogaster (Fruit fly).